The following is a 171-amino-acid chain: S-ribosylhomocysteine lyase (171 aa).

3 residues coordinate Fe cation: His-54, His-58, and Cys-128.

The protein belongs to the LuxS family. In terms of assembly, homodimer. The cofactor is Fe cation.

It catalyses the reaction S-(5-deoxy-D-ribos-5-yl)-L-homocysteine = (S)-4,5-dihydroxypentane-2,3-dione + L-homocysteine. Functionally, involved in the synthesis of autoinducer 2 (AI-2) which is secreted by bacteria and is used to communicate both the cell density and the metabolic potential of the environment. The regulation of gene expression in response to changes in cell density is called quorum sensing. Catalyzes the transformation of S-ribosylhomocysteine (RHC) to homocysteine (HC) and 4,5-dihydroxy-2,3-pentadione (DPD). This is S-ribosylhomocysteine lyase from Escherichia coli (strain 55989 / EAEC).